The sequence spans 923 residues: Carnitine O-acetyltransferase YAT2 (923 aa).

The segment covering 1 to 11 (MSSGSTIVSSD) has biased composition (polar residues). Disordered stretches follow at residues 1–21 (MSSGSTIVSSDKSGRTFKHEE) and 197–232 (NKPYTASDLEDPDYSSDEDDNDEPTQKDFDDRKRKH). At Ser2 the chain carries N-acetylserine. Residues 12–21 (KSGRTFKHEE) show a composition bias toward basic and acidic residues. A compositionally biased stretch (acidic residues) spans 204 to 219 (DLEDPDYSSDEDDNDE). Basic and acidic residues predominate over residues 220 to 232 (PTQKDFDDRKRKH). CoA-binding positions include 529–541 (GRRSAQRLGVKPD) and Ser567. Residue Ser576 coordinates (R)-carnitine. The interval 763–787 (NAVNNPPKRNGHTVNGSRKTSSSSQ) is disordered. Residues 774–787 (HTVNGSRKTSSSSQ) show a composition bias toward polar residues. Ser783 bears the Phosphoserine mark.

The protein belongs to the carnitine/choline acetyltransferase family.

It is found in the cytoplasm. It carries out the reaction (R)-carnitine + acetyl-CoA = O-acetyl-(R)-carnitine + CoA. Its function is as follows. Carnitine O-acetyltransferase involved in the shutteling of acetyl-CoA in the cell. The polypeptide is Carnitine O-acetyltransferase YAT2 (Saccharomyces cerevisiae (strain ATCC 204508 / S288c) (Baker's yeast)).